The following is a 252-amino-acid chain: MGKNKLEKFADMASYPHVFEYPYSAVDNVPFDMKGKWHKEFFKNDNPIVLELGCGRGEYTVGLGRMFPDKNFIAVDIKGARMWTGATESLQAGMKNVAFLRTNIEIIDRFFAEGEVSEIWLTFSDPQMKKATKRLTSTYFMERYRKFLVSNGIIHLKTDSNFMFTYTKYMIEENGLPVEFITEDLYHSDLVDDILGIKTYYEQQWLDRGLSIKYIKFLLPQEGELREPDIEIELDSYRSYNRSKRSGLQTSK.

S-adenosyl-L-methionine contacts are provided by Glu51, Asp76, Asn103, and Asp125. Asp125 is a catalytic residue. Substrate-binding positions include Lys129, Asp159, and Thr199–Glu202.

It belongs to the class I-like SAM-binding methyltransferase superfamily. TrmB family.

The enzyme catalyses guanosine(46) in tRNA + S-adenosyl-L-methionine = N(7)-methylguanosine(46) in tRNA + S-adenosyl-L-homocysteine. It functions in the pathway tRNA modification; N(7)-methylguanine-tRNA biosynthesis. Its function is as follows. Catalyzes the formation of N(7)-methylguanine at position 46 (m7G46) in tRNA. This is tRNA (guanine-N(7)-)-methyltransferase from Bacteroides fragilis (strain YCH46).